The sequence spans 780 residues: Protein phosphatase 1 regulatory subunit 21 (780 aa).

Coiled coils occupy residues 1 to 207 (MASA…LKTL) and 556 to 607 (ESRE…LKNT). The interval 84 to 104 (EPRGKKNKKSGESSSQLSQEQ) is disordered. The segment covering 95-104 (ESSSQLSQEQ) has biased composition (low complexity). Thr-652 carries the post-translational modification Phosphothreonine. A coiled-coil region spans residues 693–742 (YAECRALSKRLALAEKSKEALTEEMKLASQNISRLQDELTTTKRSYEDQL). Positions 760 to 780 (REEIDTLKMSSKGNSKKNKSR) are disordered.

In terms of assembly, component of the FERRY complex, composed of five subunits: TBCK, PPP1R21, FERRY3, CRYZL1 and GATAD1, with a ratio of 1:2:1:2:4 respectively. PPP1R21 serves as a binding hub connecting all five complex subunits to mediate the binding to specific mitochondrial mRNAs. Interacts with the GTP-bound form of RAB5A (via its C-terminal region); linking the mRNP complex onto trafficking endosomes for active mRNA transport. Interacts with PPP1CA.

Its subcellular location is the early endosome. Functionally, component of the FERRY complex (Five-subunit Endosomal Rab5 and RNA/ribosome intermediary). The FERRY complex directly interacts with mRNAs and RAB5A, and functions as a RAB5A effector involved in the localization and the distribution of specific mRNAs most likely by mediating their endosomal transport. The complex recruits mRNAs and ribosomes to early endosomes through direct mRNA-interaction. In the complex, PPP1R21 serves as a binding hub connecting all five complex subunits and mediating the binding to mRNA and early endosomes via RAB5A. Putative regulator of protein phosphatase 1 (PP1) activity. May play a role in the endosomal sorting process or in endosome maturation pathway. The polypeptide is Protein phosphatase 1 regulatory subunit 21 (PPP1R21) (Homo sapiens (Human)).